Here is a 333-residue protein sequence, read N- to C-terminus: uncharacterized protein (333 aa).

An N-terminal signal peptide occupies residues 1–23; sequence MSRSFMIILTIMLIALSLGEVLA. A helical transmembrane segment spans residues 232 to 252; that stretch reads SFFLGVLVTLMILSPVIVYLW.

It localises to the membrane. This is an uncharacterized protein from Pyrococcus abyssi (strain GE5 / Orsay).